The sequence spans 152 residues: Ribonuclease HI (152 aa).

The region spanning 1 to 142 is the RNase H type-1 domain; sequence MDSKVVIYTD…ADKLAVQGRE (142 aa). Positions 10, 48, 70, and 134 each coordinate Mg(2+).

This sequence belongs to the RNase H family. As to quaternary structure, monomer. The cofactor is Mg(2+).

The protein localises to the cytoplasm. The enzyme catalyses Endonucleolytic cleavage to 5'-phosphomonoester.. Functionally, endonuclease that specifically degrades the RNA of RNA-DNA hybrids. The sequence is that of Ribonuclease HI (rnhA) from Rickettsia prowazekii (strain Madrid E).